An 839-amino-acid polypeptide reads, in one-letter code: Probable beta-glucosidase I (839 aa).

Asn-197 is a glycosylation site (N-linked (GlcNAc...) asparagine). The active site involves Asp-225. One can recognise a PA14 domain in the interval 395–555 (DGKTGFSFKV…GQEELISNAV (161 aa)). N-linked (GlcNAc...) asparagine glycosylation occurs at Asn-620.

Belongs to the glycosyl hydrolase 3 family.

The protein resides in the secreted. It carries out the reaction Hydrolysis of terminal, non-reducing beta-D-glucosyl residues with release of beta-D-glucose.. It participates in glycan metabolism; cellulose degradation. In terms of biological role, beta-glucosidases are one of a number of cellulolytic enzymes involved in the degradation of cellulosic biomass. Catalyzes the last step releasing glucose from the inhibitory cellobiose. The sequence is that of Probable beta-glucosidase I (bglI) from Aspergillus flavus (strain ATCC 200026 / FGSC A1120 / IAM 13836 / NRRL 3357 / JCM 12722 / SRRC 167).